Reading from the N-terminus, the 616-residue chain is Glucoamylase P (616 aa).

The signal sequence occupies residues 1-29; it reads MRLLPSSCAGALSLLCSLAIAAPTELKAR. Trp-149 lines the substrate pocket. The N-linked (GlcNAc...) asparagine glycan is linked to Asn-200. The active-site Proton acceptor is Asp-205. The active-site Proton donor is Glu-208. The N-linked (GlcNAc...) asparagine glycan is linked to Asn-427. A CBM20 domain is found at 501 to 608; it reads VTSSCQVSIT…AVTTDDAWMG (108 aa).

The protein belongs to the glycosyl hydrolase 15 family.

It is found in the secreted. The catalysed reaction is Hydrolysis of terminal (1-&gt;4)-linked alpha-D-glucose residues successively from non-reducing ends of the chains with release of beta-D-glucose.. In Amorphotheca resinae (Creosote fungus), this protein is Glucoamylase P (GAMP).